The chain runs to 589 residues: PTS system mannitol-specific EIICB component (589 aa).

The Cytoplasmic portion of the chain corresponds to 1-25; it reads MEEKVSLKVRVQKLGTSLSNMVMPN. One can recognise a PTS EIIC type-2 domain in the interval 14-347; that stretch reads LGTSLSNMVM…LHADKSTEDS (334 aa). Residues 26 to 47 traverse the membrane as a helical segment; the sequence is IGAFIAWGVLTALFIADGYLPN. Topologically, residues 48–51 are extracellular; sequence EQLA. The chain crosses the membrane as a helical span at residues 52–72; the sequence is TVVGPMLTYLLPILIGYTGGY. Topologically, residues 73–135 are cytoplasmic; sequence MIHGQRGAVV…PGFEMLVNNF (63 aa). Residues 136–157 form a helical membrane-spanning segment; it reads SAGLVGFALLLLAFYAIGPVVS. Over 158-166 the chain is Extracellular; the sequence is TLTGAVGNG. A helical transmembrane segment spans residues 167 to 187; that stretch reads VEAIVNARLLPMANIIIEPAK. Over 188–274 the chain is Cytoplasmic; the sequence is VLFLNNALNH…VMMKPTLFLA (87 aa). The helical transmembrane segment at 275–294 threads the bilayer; the sequence is AMAGGISGTFTFQLLDAGLK. Topologically, residues 295 to 316 are extracellular; that stretch reads SPASPGSIIAIIATAPKGVWPH. The helical transmembrane segment at 317 to 338 threads the bilayer; the sequence is LNVLLGVLVAAVVSFLVAALIL. Topologically, residues 339–589 are cytoplasmic; it reads HADKSTEDSL…YDKMAARMYK (251 aa). Residues 381–476 form the PTS EIIB type-2 domain; the sequence is EKIIFACDAG…SLTGASPIAE (96 aa). Cys387 serves as the catalytic Phosphocysteine intermediate; for EIIB activity. Cys387 is modified (phosphocysteine; by EIIA).

As to quaternary structure, homodimer.

It is found in the cell membrane. It catalyses the reaction D-mannitol(out) + N(pros)-phospho-L-histidyl-[protein] = D-mannitol 1-phosphate(in) + L-histidyl-[protein]. In terms of biological role, the phosphoenolpyruvate-dependent sugar phosphotransferase system (sugar PTS), a major carbohydrate active transport system, catalyzes the phosphorylation of incoming sugar substrates concomitantly with their translocation across the cell membrane. The enzyme II CmtAB PTS system is involved in D-mannitol transport. This chain is PTS system mannitol-specific EIICB component (mtlA), found in Streptococcus pneumoniae serotype 4 (strain ATCC BAA-334 / TIGR4).